The chain runs to 182 residues: Large ribosomal subunit protein uL6 (182 aa).

This sequence belongs to the universal ribosomal protein uL6 family. In terms of assembly, part of the 50S ribosomal subunit.

Its function is as follows. This protein binds to the 23S rRNA, and is important in its secondary structure. It is located near the subunit interface in the base of the L7/L12 stalk, and near the tRNA binding site of the peptidyltransferase center. This is Large ribosomal subunit protein uL6 from Carboxydothermus hydrogenoformans (strain ATCC BAA-161 / DSM 6008 / Z-2901).